A 233-amino-acid polypeptide reads, in one-letter code: uncharacterized protein (233 aa).

Residues 1 to 10 are compositionally biased toward basic residues; the sequence is MSSKLSKKKL. Residues 1–90 form a disordered region; the sequence is MSSKLSKKKL…KRQKGKNNDR (90 aa). The span at 11-56 shows a compositional bias: basic and acidic residues; the sequence is KSLEYRSKKFDKKSQSLEEHEKKVQQKNEELEKKAADKISRDELPE. Residues 76–85 are compositionally biased toward basic residues; that stretch reads KTLKSKRQKG. The RRM domain maps to 92-171; it reads VILFVGNLPK…RKINIELTAG (80 aa). 2 stretches are compositionally biased toward basic and acidic residues: residues 194-216 and 224-233; these read MRQR…KAVA and IHPDRLRLLQ. Positions 194–233 are disordered; sequence MRQRVASEEQQAGEEKMARKAVADEGLESGIHPDRLRLLQ.

The protein localises to the nucleus. It localises to the nucleolus. This is an uncharacterized protein from Schizosaccharomyces pombe (strain 972 / ATCC 24843) (Fission yeast).